A 453-amino-acid chain; its full sequence is tRNA modification GTPase MnmE (453 aa).

The (6S)-5-formyl-5,6,7,8-tetrahydrofolate site is built by Arg22, Glu79, and Lys119. Residues 215–376 enclose the TrmE-type G domain; the sequence is GMKVVIAGRP…LKQHLKSLMG (162 aa). Asn225 lines the K(+) pocket. GTP contacts are provided by residues 225-230, 244-250, 269-272, and 334-337; these read NAGKSS, TDIAGTT, DTAG, and NKAD. Residue Ser229 coordinates Mg(2+). The K(+) site is built by Thr244, Ile246, and Thr249. Thr250 is a Mg(2+) binding site. Residue Lys453 coordinates (6S)-5-formyl-5,6,7,8-tetrahydrofolate.

This sequence belongs to the TRAFAC class TrmE-Era-EngA-EngB-Septin-like GTPase superfamily. TrmE GTPase family. As to quaternary structure, homodimer. Heterotetramer of two MnmE and two MnmG subunits. K(+) is required as a cofactor.

The protein localises to the cytoplasm. In terms of biological role, exhibits a very high intrinsic GTPase hydrolysis rate. Involved in the addition of a carboxymethylaminomethyl (cmnm) group at the wobble position (U34) of certain tRNAs, forming tRNA-cmnm(5)s(2)U34. The protein is tRNA modification GTPase MnmE of Shewanella amazonensis (strain ATCC BAA-1098 / SB2B).